A 452-amino-acid polypeptide reads, in one-letter code: Exodeoxyribonuclease 7 large subunit (452 aa).

It belongs to the XseA family. As to quaternary structure, heterooligomer composed of large and small subunits.

It localises to the cytoplasm. The catalysed reaction is Exonucleolytic cleavage in either 5'- to 3'- or 3'- to 5'-direction to yield nucleoside 5'-phosphates.. Functionally, bidirectionally degrades single-stranded DNA into large acid-insoluble oligonucleotides, which are then degraded further into small acid-soluble oligonucleotides. The sequence is that of Exodeoxyribonuclease 7 large subunit from Bacillus thuringiensis (strain Al Hakam).